The following is a 132-amino-acid chain: ATP synthase epsilon chain (132 aa).

Belongs to the ATPase epsilon chain family. F-type ATPases have 2 components, CF(1) - the catalytic core - and CF(0) - the membrane proton channel. CF(1) has five subunits: alpha(3), beta(3), gamma(1), delta(1), epsilon(1). CF(0) has three main subunits: a, b and c.

It is found in the cell inner membrane. In terms of biological role, produces ATP from ADP in the presence of a proton gradient across the membrane. The protein is ATP synthase epsilon chain of Gloeobacter violaceus (strain ATCC 29082 / PCC 7421).